Here is a 338-residue protein sequence, read N- to C-terminus: Envelope glycoprotein K (338 aa).

A signal peptide spans 1–30; the sequence is MLAVRSLQHLTTVIFITAYGLVLAWYIVFG. Residues 31 to 121 lie on the Extracellular side of the membrane; that stretch reads ASPLHRCIYA…VNCLEALWDT (91 aa). Residues 31–121 form an involved in fusion region; that stretch reads ASPLHRCIYA…VNCLEALWDT (91 aa). Residues Asn48 and Asn58 are each glycosylated (N-linked (GlcNAc...) asparagine; by host). The helical transmembrane segment at 122-140 threads the bilayer; sequence QMRLVVVGWFLYLAFVALH. Over 141 to 212 the chain is Cytoplasmic; sequence QRRCMFGVVS…DPVTFLYHRP (72 aa). A helical membrane pass occupies residues 213 to 233; it reads AIGVIVGCELLLRFVALGLIV. Residues 234-243 lie on the Extracellular side of the membrane; it reads GTALISRGAC. A helical transmembrane segment spans residues 244–264; it reads AITHPLFLTITTWCFVSIIAL. The Cytoplasmic portion of the chain corresponds to 265–301; sequence TELYFILRRGSAPKNAEPAAPRGRSKGWSGVCGRCCS. The interaction with UL20 stretch occupies residues 265–301; it reads TELYFILRRGSAPKNAEPAAPRGRSKGWSGVCGRCCS. A helical transmembrane segment spans residues 302–322; it reads IILSGIAVRLCYIAVVAGVVL. The Extracellular portion of the chain corresponds to 323-338; sequence VALRYEQEIQRRLFDL.

Belongs to the alphaherpesvirinae glycoprotein K family. In terms of assembly, interacts (via UL20 interaction region) with protein UL20 (via N-terminus); this interaction probably plays a role in the coordinate transport of protein UL20 and gK to the trans-Golgi network (TGN), and is required for the cell surface expression of gK. N-glycosylated.

It is found in the host cell membrane. Its subcellular location is the host endosome membrane. The protein localises to the host Golgi apparatus membrane. Functionally, glycoprotein that probably modulates membrane fusion events during secondary envelopment of cytoplasmic capsids that bud into specific trans-Golgi network (TGN)-derived membranes. Also plays a role, together with gB, in virus-induced cell-to-cell fusion (syncytia formation). Seems to block fusion of virions with infected-cell membranes. In Human herpesvirus 2 (strain HG52) (HHV-2), this protein is Envelope glycoprotein K (gK).